The sequence spans 297 residues: Phospholipid scramblase 2 (297 aa).

The segment at 1-72 (MRSWNSLFCL…NQPGRPEGVP (72 aa)) is proline-rich domain (PRD). Over 1–276 (MRSWNSLFCL…IQFPRDLDVK (276 aa)) the chain is Cytoplasmic. Phosphothreonine; by PKC is present on T149. Residues C172, C173, C174, C176, and C177 are each lipidated (S-palmitoyl cysteine). Residues 277 to 293 (MKAVMIGACFLIDYMFF) form a helical membrane-spanning segment. At 294 to 297 (ERTR) the chain is on the extracellular side.

The protein belongs to the phospholipid scramblase family. Ca(2+) is required as a cofactor. Expression of isoform 1 seems restricted to testis.

The protein resides in the membrane. The protein localises to the nucleus. It carries out the reaction a 1,2-diacyl-sn-glycero-3-phosphocholine(in) = a 1,2-diacyl-sn-glycero-3-phosphocholine(out). In terms of biological role, may catalyze calcium-induced ATP-independent rapid bidirectional and non-specific movement of phospholipids (lipid scrambling or lipid flip-flop) between the inner and outer leaflet of the plasma membrane. Functionally, has no phospholipid scramblase activity, due to the lack of a N-terminal proline-rich domain. The protein is Phospholipid scramblase 2 of Homo sapiens (Human).